Here is a 292-residue protein sequence, read N- to C-terminus: E3 ubiquitin-protein ligase trim-21 (292 aa).

The segment at 6 to 52 adopts an RING-type zinc-finger fold; the sequence is CEICDDDFSSEEDGDHNPRNLKCSHTLCEGCIKKLLKNGRVVCPFCR. The B box-type zinc-finger motif lies at 90–137; sequence NFPPKCVEHPYNVAEFACIESNCSSKNKLMCQTCEEFGAHKGHAKELL. Zn(2+)-binding residues include cysteine 95, histidine 98, cysteine 123, and histidine 129. Residues 152 to 179 are a coiled coil; it reads INQLKLNIQNCTVKKNELEEAVVKSEQL.

The protein belongs to the TRIM/RBCC family. As to quaternary structure, interacts with E2 ubiquitin-conjugating enzyme ubc-21. Interacts with ced-6; this mediates interaction of trim-21 with ced-1 and is required for ced-1 ubiquitination. Interacts with nck-1; the interaction is required for ced-1 ubiquitination. In early larva, observed mainly in pharyngeal and body wall muscle cells.

The protein resides in the cytoplasm. It catalyses the reaction S-ubiquitinyl-[E2 ubiquitin-conjugating enzyme]-L-cysteine + [acceptor protein]-L-lysine = [E2 ubiquitin-conjugating enzyme]-L-cysteine + N(6)-ubiquitinyl-[acceptor protein]-L-lysine.. The protein operates within protein modification; protein ubiquitination. In terms of biological role, E3 ubiquitin-protein ligase which catalyzes 'Lys-48'-linked polyubiquitination of ced-1, promoting its proteasomal degradation to maintain appropriate ced-1 levels for apoptotic cell clearance. Acts together with E2 ubiquitin-conjugating enzyme ubc-21. In Caenorhabditis elegans, this protein is E3 ubiquitin-protein ligase trim-21.